Consider the following 363-residue polypeptide: Large ribosomal subunit protein uL4B (363 aa).

The C-terminal-extended nuclear localization signal stretch occupies residues 280 to 363 (PENIISNADV…EKFLSVLHEN (84 aa)).

This sequence belongs to the universal ribosomal protein uL4 family. Component of the large ribosomal subunit (LSU). Mature yeast ribosomes consist of a small (40S) and a large (60S) subunit. The 40S small subunit contains 1 molecule of ribosomal RNA (18S rRNA) and at least 33 different proteins. The large 60S subunit contains 3 rRNA molecules (25S, 5.8S and 5S rRNA) and at least 46 different proteins. uL4 is associated with the polypeptide exit tunnel. uL4 interacts with its chaperone ACL4 and the nuclear import receptor KAP104.

It is found in the cytoplasm. Its function is as follows. Component of the ribosome, a large ribonucleoprotein complex responsible for the synthesis of proteins in the cell. The small ribosomal subunit (SSU) binds messenger RNAs (mRNAs) and translates the encoded message by selecting cognate aminoacyl-transfer RNA (tRNA) molecules. The large subunit (LSU) contains the ribosomal catalytic site termed the peptidyl transferase center (PTC), which catalyzes the formation of peptide bonds, thereby polymerizing the amino acids delivered by tRNAs into a polypeptide chain. The nascent polypeptides leave the ribosome through a tunnel in the LSU and interact with protein factors that function in enzymatic processing, targeting, and the membrane insertion of nascent chains at the exit of the ribosomal tunnel. In Schizosaccharomyces pombe (strain 972 / ATCC 24843) (Fission yeast), this protein is Large ribosomal subunit protein uL4B (rpl401).